The primary structure comprises 123 residues: uncharacterized protein (123 aa).

Residues 17-117 (SNDNAFLVDV…NNQDKGWKQN (101 aa)) form the Rhodanese domain.

This is an uncharacterized protein from Rickettsia rickettsii.